The chain runs to 815 residues: DNA topoisomerase 1 (815 aa).

In terms of domain architecture, Toprim spans K3 to P119. Mg(2+) contacts are provided by E9 and D82. Residues A133–V573 enclose the Topo IA-type catalytic domain. The tract at residues S167 to Q172 is interaction with DNA. Y308 (O-(5'-phospho-DNA)-tyrosine intermediate) is an active-site residue. The tract at residues G760–E815 is disordered. Residues T774–V801 are compositionally biased toward basic and acidic residues.

Belongs to the type IA topoisomerase family. As to quaternary structure, monomer. Mg(2+) serves as cofactor.

It carries out the reaction ATP-independent breakage of single-stranded DNA, followed by passage and rejoining.. Releases the supercoiling and torsional tension of DNA, which is introduced during the DNA replication and transcription, by transiently cleaving and rejoining one strand of the DNA duplex. Introduces a single-strand break via transesterification at a target site in duplex DNA. The scissile phosphodiester is attacked by the catalytic tyrosine of the enzyme, resulting in the formation of a DNA-(5'-phosphotyrosyl)-enzyme intermediate and the expulsion of a 3'-OH DNA strand. The free DNA strand then undergoes passage around the unbroken strand, thus removing DNA supercoils. Finally, in the religation step, the DNA 3'-OH attacks the covalent intermediate to expel the active-site tyrosine and restore the DNA phosphodiester backbone. The sequence is that of DNA topoisomerase 1 from Xylella fastidiosa (strain 9a5c).